The sequence spans 237 residues: LexA repressor (237 aa).

Positions M1 to N12 are enriched in polar residues. The interval M1–R20 is disordered. Positions I41–K61 form a DNA-binding region, H-T-H motif. Residues G67–D80 show a composition bias toward basic and acidic residues. The tract at residues G67–T112 is disordered. Residues S161 and K198 each act as for autocatalytic cleavage activity in the active site.

It belongs to the peptidase S24 family. In terms of assembly, homodimer.

It catalyses the reaction Hydrolysis of Ala-|-Gly bond in repressor LexA.. Its function is as follows. Represses a number of genes involved in the response to DNA damage (SOS response), including recA and lexA. In the presence of single-stranded DNA, RecA interacts with LexA causing an autocatalytic cleavage which disrupts the DNA-binding part of LexA, leading to derepression of the SOS regulon and eventually DNA repair. The polypeptide is LexA repressor (Corynebacterium diphtheriae (strain ATCC 700971 / NCTC 13129 / Biotype gravis)).